We begin with the raw amino-acid sequence, 179 residues long: ATP synthase subunit delta (179 aa).

This sequence belongs to the ATPase delta chain family. As to quaternary structure, F-type ATPases have 2 components, F(1) - the catalytic core - and F(0) - the membrane proton channel. F(1) has five subunits: alpha(3), beta(3), gamma(1), delta(1), epsilon(1). F(0) has three main subunits: a(1), b(2) and c(10-14). The alpha and beta chains form an alternating ring which encloses part of the gamma chain. F(1) is attached to F(0) by a central stalk formed by the gamma and epsilon chains, while a peripheral stalk is formed by the delta and b chains.

The protein resides in the cell membrane. Its function is as follows. F(1)F(0) ATP synthase produces ATP from ADP in the presence of a proton or sodium gradient. F-type ATPases consist of two structural domains, F(1) containing the extramembraneous catalytic core and F(0) containing the membrane proton channel, linked together by a central stalk and a peripheral stalk. During catalysis, ATP synthesis in the catalytic domain of F(1) is coupled via a rotary mechanism of the central stalk subunits to proton translocation. Functionally, this protein is part of the stalk that links CF(0) to CF(1). It either transmits conformational changes from CF(0) to CF(1) or is implicated in proton conduction. This Clostridium botulinum (strain Alaska E43 / Type E3) protein is ATP synthase subunit delta.